A 138-amino-acid chain; its full sequence is Trypsin inhibitor DE5 alpha chain (138 aa).

A disulfide bond links Cys40 and Cys86.

Belongs to the protease inhibitor I3 (leguminous Kunitz-type inhibitor) family. As to quaternary structure, heterodimer of an alpha and a beta chain linked by a disulfide bond.

Its function is as follows. Inhibition of trypsin. The protein is Trypsin inhibitor DE5 alpha chain of Adenanthera pavonina (Sandal bead tree).